A 140-amino-acid chain; its full sequence is MQHRSFFLLALVALLAVTTAVAKKKDKVKKGSECSEWTWGPCTPSSKDCGMGFREGTCGAQTQRIHCKVPCNWKKEFGADCKYKFESWGACDGSTGTKARQGTLKKARYNAQCQETIRVTKPCTSKTKSKAKAKKGKGKD.

Positions 1-20 (MQHRSFFLLALVALLAVTTA) are cleaved as a signal peptide. Disulfide bonds link C34-C58, C42-C67, C49-C71, C81-C113, and C91-C123.

The protein belongs to the pleiotrophin family. As to quaternary structure, homodimer. Interacts with ALK. Interacts with LRP1; promotes neuronal survival. Interacts with LRP2. Interacts with NCAM1. Interacts (via C-terminal) with PTPRZ1 (via chondroitin sulfate chains); this interaction is inhibited by PTN; this interaction promotes neuronal migration. Interacts with NCL; this interaction promotes NCL clustering and lateral movements of this complex into lipid rafts leading to MDK internalization. Interacts with LRP6 and LRP8: this interaction is calcium dependent. Interacts with ITGA4. Interacts with ITGA6. Interacts with ITGB1. Interacts with ITGA4:ITGB1 complex; this interaction mediates MDK-induced osteoblast cells migration through PXN phosphorylation. Interacts with ITGA6:ITGB1 complex; this interaction mediates MDK-induced neurite outgrowth. Interacts with NOTCH2; this interactio mediates a nuclear accumulation of NOTCH2 and therefore activation of NOTCH2 signaling leading to interaction between HES1 and STAT3. Interacts with GPC2 (via heparan sulfate chain); this interaction is inhibited by heparin followed by chondroitin sulfate E; this interaction induces GPC2 clustering through heparan sulfate chain; this interaction induces neuronal cell adhesion and neurite outgrowth. Interacts with SDC3; this interaction induces SDC3 clustering; this interaction induces neuronal cell adhesion and neurite outgrowth. Interacts with SDC1. Interacts with CSPG5; this interaction promotes elongation of oligodendroglial precursor-like cells. As to expression, expressed at a low level in arteries, and at higher levels in newly formed neointima. In brain, expressed in the caudate nucleus and the brain stem.

The protein localises to the secreted. In terms of biological role, developmentally regulated, secreted growth factor homologous to pleiotrophin (PTN), which has heparin binding activity. Binds anaplastic lymphoma kinase (ALK) which induces ALK activation and subsequent phosphorylation of the insulin receptor substrate (IRS1), followed by the activation of mitogen-activated protein kinase (MAPK) and PI3-kinase, and the induction of cell proliferation. Involved in neointima formation after arterial injury, possibly by mediating leukocyte recruitment. Also involved in early fetal adrenal gland development. Its function is as follows. Secreted protein that functions as a cytokine and growth factor and mediates its signal through cell-surface proteoglycan and non-proteoglycan receptors. Binds cell-surface proteoglycan receptors via their chondroitin sulfate (CS) groups. Thereby regulates many processes like inflammatory response, cell proliferation, cell adhesion, cell growth, cell survival, tissue regeneration, cell differentiation and cell migration. Participates in inflammatory processes by exerting two different activities. Firstly, mediates neutrophils and macrophages recruitment to the sites of inflammation both by direct action by cooperating namely with ITGB2 via LRP1 and by inducing chemokine expression. This inflammation can be accompanied by epithelial cell survival and smooth muscle cell migration after renal and vessel damage, respectively. Secondly, suppresses the development of tolerogenic dendric cells thereby inhibiting the differentiation of regulatory T cells and also promote T cell expansion through NFAT signaling and Th1 cell differentiation. Promotes tissue regeneration after injury or trauma. After heart damage negatively regulates the recruitment of inflammatory cells and mediates cell survival through activation of anti-apoptotic signaling pathways via MAPKs and AKT pathways through the activation of angiogenesis. Also facilitates liver regeneration as well as bone repair by recruiting macrophage at trauma site and by promoting cartilage development by facilitating chondrocyte differentiation. Plays a role in brain by promoting neural precursor cells survival and growth through interaction with heparan sulfate proteoglycans. Binds PTPRZ1 and promotes neuronal migration and embryonic neurons survival. Binds SDC3 or GPC2 and mediates neurite outgrowth and cell adhesion. Binds chondroitin sulfate E and heparin leading to inhibition of neuronal cell adhesion induced by binding with GPC2. Binds CSPG5 and promotes elongation of oligodendroglial precursor-like cells. Also binds ITGA6:ITGB1 complex; this interaction mediates MDK-induced neurite outgrowth. Binds LRP1; promotes neuronal survival. Binds ITGA4:ITGB1 complex; this interaction mediates MDK-induced osteoblast cells migration through PXN phosphorylation. Binds anaplastic lymphoma kinase (ALK) which induces ALK activation and subsequent phosphorylation of the insulin receptor substrate (IRS1), followed by the activation of mitogen-activated protein kinase (MAPK) and PI3-kinase, and the induction of cell proliferation. Promotes epithelial to mesenchymal transition through interaction with NOTCH2. During arteriogenesis, plays a role in vascular endothelial cell proliferation by inducing VEGFA expression and release which in turn induces nitric oxide synthase expression. Moreover activates vasodilation through nitric oxide synthase activation. Negatively regulates bone formation in response to mechanical load by inhibiting Wnt/beta-catenin signaling in osteoblasts. In addition plays a role in hippocampal development, working memory, auditory response, early fetal adrenal gland development and the female reproductive system. The protein is Midkine of Rattus norvegicus (Rat).